We begin with the raw amino-acid sequence, 218 residues long: Glutathione S-transferase Mu 1 (218 aa).

Residues 2–88 (PMTLGYWDVR…YLARKHGLCG (87 aa)) form the GST N-terminal domain. Residues 7–8 (YW), 46–50 (WLSEK), 59–60 (NL), and 72–73 (QS) each bind glutathione. One can recognise a GST C-terminal domain in the interval 90–208 (TEEERIRVDI…KSSRFIRVPV (119 aa)). A substrate-binding site is contributed by tyrosine 116.

It belongs to the GST superfamily. Mu family. Homodimer. Well expressed in rabbit liver, brain and kidney.

It is found in the cytoplasm. It carries out the reaction RX + glutathione = an S-substituted glutathione + a halide anion + H(+). Functionally, conjugation of reduced glutathione to a wide number of exogenous and endogenous hydrophobic electrophiles. The chain is Glutathione S-transferase Mu 1 from Oryctolagus cuniculus (Rabbit).